The primary structure comprises 44 residues: Antibacterial protein 3 (44 aa).

At methionine 1 the chain carries N-formylmethionine.

It belongs to the staphylococcal hemolytic protein family.

It is found in the secreted. Its function is as follows. Has hemolytic activity and also inhibits the growth of gonococci. In Staphylococcus haemolyticus, this protein is Antibacterial protein 3.